The primary structure comprises 408 residues: Lupus La protein (408 aa).

Residues 7–99 (NEKMAALEAK…RRSPSKPLPE (93 aa)) enclose the HTH La-type RNA-binding domain. Phosphoserine occurs at positions 92 and 94. Residues 111-187 (RSVYIKGFPT…TDLLILFKDD (77 aa)) enclose the RRM domain. Lysine 116 is modified (N6-acetyllysine). Threonine 120 carries the phosphothreonine modification. Residue lysine 128 is modified to N6-acetyllysine. Serine 225 carries the phosphoserine modification. Residues 227-348 (EEKIGCLLKF…KGKGNKAAQP (122 aa)) enclose the xRRM domain. 3 positions are modified to N6-acetyllysine: lysine 328, lysine 341, and lysine 360. Residues 329–342 (WKSKGRRFKGKGKG) are compositionally biased toward basic residues. The disordered stretch occupies residues 329–408 (WKSKGRRFKG…QKTENGAGDQ (80 aa)). A Phosphothreonine modification is found at threonine 362. Serine 366 carries the phosphoserine; by CK2 modification. Basic and acidic residues predominate over residues 384–395 (RAREETDKEEPA).

As to quaternary structure, interacts with DDX15. May interact with RUFY1. Post-translationally, phosphorylated. The phosphorylation sites are at the C-terminal part of the protein. The N-terminus is blocked.

It is found in the nucleus. Binds to the 3' poly(U) terminus of nascent RNA polymerase III transcripts, protecting them from exonuclease digestion and facilitating their folding and maturation. In case of Coxsackievirus B3 infection, binds to the viral internal ribosome entry site (IRES) and stimulates the IRES-mediated translation. The protein is Lupus La protein (SSB) of Homo sapiens (Human).